A 152-amino-acid chain; its full sequence is UPF0756 membrane protein JDM1_1594 (152 aa).

4 consecutive transmembrane segments (helical) span residues 25–45 (ATVV…LTTI), 52–72 (WGVT…QIGF), 85–105 (WIAV…VGLL), and 115–135 (LVFG…GPII).

It belongs to the UPF0756 family.

The protein localises to the cell membrane. The polypeptide is UPF0756 membrane protein JDM1_1594 (Lactiplantibacillus plantarum (strain JDM1) (Lactobacillus plantarum)).